A 180-amino-acid polypeptide reads, in one-letter code: CASP-like protein XL3 (180 aa).

Residues M1–K7 are Cytoplasmic-facing. The helical transmembrane segment at I8–G28 threads the bilayer. The Extracellular portion of the chain corresponds to L29–R49. A helical membrane pass occupies residues A50 to C70. Topologically, residues C71–Q98 are cytoplasmic. The helical transmembrane segment at A99–L119 threads the bilayer. Residues T120–Q140 are Extracellular-facing. Residues I141–I161 traverse the membrane as a helical segment. The Cytoplasmic segment spans residues S162–L180.

This sequence belongs to the Casparian strip membrane proteins (CASP) family. Homodimer and heterodimers.

Its subcellular location is the cell membrane. This is CASP-like protein XL3 (XL3) from Gossypium hirsutum (Upland cotton).